A 704-amino-acid chain; its full sequence is Matrix metalloproteinase-9 (704 aa).

Residues 1–19 (MSPRQPLVLVFLVLGCCSA) form the signal peptide. Positions 20 to 106 (APRPHKPTVV…PRCGVPDLGK (87 aa)) are cleaved as a propeptide — activation peptide. An N-linked (GlcNAc...) asparagine glycan is attached at Asn-38. The short motif at 97–104 (PRCGVPDL) is the Cysteine switch element. Cys-99 is a Zn(2+) binding site. The N-linked (GlcNAc...) asparagine glycan is linked to Asn-127. Residues Asp-131 and Asp-165 each contribute to the Ca(2+) site. Residues His-175 and Asp-177 each coordinate Zn(2+). Ca(2+)-binding residues include Asp-182, Gly-183, Asn-185, and Leu-187. His-190 is a binding site for Zn(2+). Residues Gly-197, Gln-199, and Asp-201 each coordinate Ca(2+). His-203 contacts Zn(2+). Residues Asp-205, Asp-206, and Glu-208 each contribute to the Ca(2+) site. 3 Fibronectin type-II domains span residues 225 to 273 (ADGA…FCPS), 283 to 331 (GDGK…FCPT), and 342 to 390 (SAGE…FCPD). Cystine bridges form between Cys-230/Cys-256, Cys-244/Cys-271, Cys-288/Cys-314, Cys-302/Cys-329, Cys-347/Cys-373, and Cys-361/Cys-388. Residue His-401 coordinates Zn(2+). Glu-402 is an active-site residue. Zn(2+) is bound by residues His-405 and His-411. The disordered stretch occupies residues 434–507 (DDVRGIQHLY…PSEAPTVPVD (74 aa)). Pro residues-rich tracts occupy residues 450–461 (EPQPPTAPPTAP) and 483–496 (TGPP…PPTA). A disulfide bridge links Cys-513 with Cys-701. 4 Hemopexin repeats span residues 515-560 (VNIF…WPAL), 561-605 (PRKL…GLGP), 607-654 (VTQV…YPGV), and 655-701 (PLNT…ILQC).

This sequence belongs to the peptidase M10A family. As to quaternary structure, exists as monomer or homodimer; disulfide-linked. Also exists as heterodimer with LCN2. Macrophages and transformed cell lines produce only the monomeric form. Interacts with ECM1. The cofactor is Zn(2+). Ca(2+) is required as a cofactor. In terms of processing, N- and O-glycosylated.

The protein localises to the secreted. The protein resides in the extracellular space. Its subcellular location is the extracellular matrix. The catalysed reaction is Cleavage of gelatin types I and V and collagen types IV and V.. In terms of biological role, matrix metalloproteinase that plays an essential role in local proteolysis of the extracellular matrix and in leukocyte migration. Could play a role in bone osteoclastic resorption. Cleaves KiSS1 at a Gly-|-Leu bond. Cleaves NINJ1 to generate the Secreted ninjurin-1 form. Cleaves type IV and type V collagen into large C-terminal three quarter fragments and shorter N-terminal one quarter fragments. Degrades fibronectin but not laminin or Pz-peptide. The polypeptide is Matrix metalloproteinase-9 (MMP9) (Canis lupus familiaris (Dog)).